Consider the following 1581-residue polypeptide: Calmodulin-regulated spectrin-associated protein 1 (1581 aa).

Positions 215 to 330 (ESPAHQKVRY…FIAELFWWFE (116 aa)) constitute a Calponin-homology (CH) domain. 4 positions are modified to phosphoserine: S216, S370, S374, and S415. A disordered region spans residues 351–399 (VLQQKSSRPPVPISNATKRSFLGSPAAMSPADQPPSTQPLAEGSHRYHL). The segment at 424–470 (RQKQQKVSQTEEIPDQRHRSNSLTRVDGQPRGAIGAWPDKKNRPVSQ) is disordered. A Phosphothreonine modification is found at T511. Phosphoserine occurs at positions 550, 553, 560, 572, and 586. Basic and acidic residues predominate over residues 603-617 (KQITTKEDERGEGRP). Residues 603–649 (KQITTKEDERGEGRPRTIMAKRPSEGSQPMVRKKVSGGHGSRDLNRT) form a disordered region. 5 positions are modified to phosphoserine: S626, S718, S724, S734, and S736. Over residues 765–785 (ESAKLQEDMKVKEHEDKDDAS) the composition is skewed to basic and acidic residues. Disordered regions lie at residues 765–803 (ESAK…SMSM) and 821–866 (LNSC…SKDP). 2 stretches are compositionally biased toward low complexity: residues 792–803 (LSTTSQLSSMSM) and 826–837 (TKSSTSSSQKTT). Residues 853-865 (QKREQSPGRHSKD) are compositionally biased toward basic and acidic residues. The tract at residues 867–888 (ASLLASELVQLHMQLEEKRRAI) is sufficient for interaction with SPTBN1. Coiled-coil stretches lie at residues 869–905 (LLAS…QRLK) and 1005–1037 (DVNE…QEQL). The segment at 899–918 (SARQRLKLGKAAFLHVVKKG) is sufficient for interaction with calmodulin. Disordered regions lie at residues 1064–1143 (FVEP…ELPE), 1225–1251 (PDED…PGVG), 1288–1315 (QLEA…EEEK), and 1332–1428 (QALE…DWET). S1069 is modified (phosphoserine). A compositionally biased stretch (basic and acidic residues) spans 1092 to 1103 (RPAELKVPKDRQ). A compositionally biased stretch (polar residues) spans 1104–1132 (QGCSRSKTPTPSVETLPQSRSLPPSTHPR). Phosphoserine is present on S1133. The span at 1225–1237 (PDEDGEVVGHESS) shows a compositional bias: basic and acidic residues. Residues 1265 to 1336 (AKKRAAFLLK…RRKQQQALEE (72 aa)) are a coiled coil. Positions 1342–1353 (PKSKPKKPRPKS) are enriched in basic residues. The segment covering 1361-1372 (SDSGTKCSSTHN) has biased composition (polar residues). Over residues 1373 to 1390 (LSQTHSGSSLSLASAATT) the composition is skewed to low complexity. A phosphoserine mark is found at S1378 and S1407. The 134-residue stretch at 1443 to 1576 (GPKLFKEPSS…QPKRPTVPKK (134 aa)) folds into the CKK domain. Y1516 carries the phosphotyrosine modification.

This sequence belongs to the CAMSAP1 family. As to quaternary structure, interacts with spectrin via SPTBN1; the interaction is direct. Interacts with calmodulin; calcium-dependent it prevents interaction with spectrin. In terms of tissue distribution, expressed in the central nervous system.

The protein localises to the cytoplasm. It is found in the cytoskeleton. Key microtubule-organizing protein that specifically binds the minus-end of non-centrosomal microtubules and regulates their dynamics and organization. Specifically recognizes growing microtubule minus-ends and stabilizes microtubules. Acts on free microtubule minus-ends that are not capped by microtubule-nucleating proteins or other factors and protects microtubule minus-ends from depolymerization. In contrast to CAMSAP2 and CAMSAP3, tracks along the growing tips of minus-end microtubules without significantly affecting the polymerization rate: binds at the very tip of the microtubules minus-end and acts as a minus-end tracking protein (-TIP) that dissociates from microtubules after allowing tubulin incorporation. Through interaction with spectrin may regulate neurite outgrowth. The chain is Calmodulin-regulated spectrin-associated protein 1 (Camsap1) from Mus musculus (Mouse).